Consider the following 294-residue polypeptide: Deubiquitinase OTUD6B (294 aa).

Methionine 1 is modified (N-acetylmethionine). One can recognise an OTU domain in the interval 148-285 (LEIKQIPSDG…GEHYNSVTRL (138 aa)). Residues 153 to 159 (IPSDGHC) are cys-loop. Aspartate 156 is a catalytic residue. The active-site Nucleophile is cysteine 159. The tract at residues 220–230 (IVNTAAWGGQL) is variable-loop. Positions 268–278 (YMRHAYGLGEH) are his-loop. Residue histidine 278 is part of the active site.

Interacts with the eukaryotic translation initiation factor 4F complex. Ubiquitously expressed. Expression is observed in several organ systems including the cardiovascular, digestive, central and peripheral nervous and musculoskeletal systems.

It carries out the reaction Thiol-dependent hydrolysis of ester, thioester, amide, peptide and isopeptide bonds formed by the C-terminal Gly of ubiquitin (a 76-residue protein attached to proteins as an intracellular targeting signal).. Functionally, deubiquitinating enzyme that may play a role in the ubiquitin-dependent regulation of protein synthesis, downstream of mTORC1. May associate with the protein synthesis initiation complex and modify its ubiquitination to repress translation. May also repress DNA synthesis and modify different cellular targets thereby regulating cell growth and proliferation. May also play a role in proteasome assembly and function. The protein is Deubiquitinase OTUD6B of Mus musculus (Mouse).